The chain runs to 184 residues: Large ribosomal subunit protein uL6 (184 aa).

It belongs to the universal ribosomal protein uL6 family. As to quaternary structure, part of the 50S ribosomal subunit.

Functionally, this protein binds to the 23S rRNA, and is important in its secondary structure. It is located near the subunit interface in the base of the L7/L12 stalk, and near the tRNA binding site of the peptidyltransferase center. The protein is Large ribosomal subunit protein uL6 of Salinibacter ruber (strain DSM 13855 / M31).